Consider the following 550-residue polypeptide: Arginine--tRNA ligase (550 aa).

Residues 130–140 (ANPTGPIHIGG) carry the 'HIGH' region motif.

Belongs to the class-I aminoacyl-tRNA synthetase family. Monomer.

The protein localises to the cytoplasm. The catalysed reaction is tRNA(Arg) + L-arginine + ATP = L-arginyl-tRNA(Arg) + AMP + diphosphate. This Mycolicibacterium gilvum (strain PYR-GCK) (Mycobacterium gilvum (strain PYR-GCK)) protein is Arginine--tRNA ligase.